The following is a 335-amino-acid chain: Methionine import ATP-binding protein MetN 1 (335 aa).

The 241-residue stretch at 2–242 (IEFQQVHKTY…PQHPTTKRFV (241 aa)) folds into the ABC transporter domain. Residue 38–45 (GHSGAGKS) coordinates ATP.

The protein belongs to the ABC transporter superfamily. Methionine importer (TC 3.A.1.24) family. The complex is composed of two ATP-binding proteins (MetN), two transmembrane proteins (MetI) and a solute-binding protein (MetQ).

It localises to the cell inner membrane. It carries out the reaction L-methionine(out) + ATP + H2O = L-methionine(in) + ADP + phosphate + H(+). The catalysed reaction is D-methionine(out) + ATP + H2O = D-methionine(in) + ADP + phosphate + H(+). Functionally, part of the ABC transporter complex MetNIQ involved in methionine import. Responsible for energy coupling to the transport system. This Pseudomonas putida (strain ATCC 47054 / DSM 6125 / CFBP 8728 / NCIMB 11950 / KT2440) protein is Methionine import ATP-binding protein MetN 1.